The sequence spans 485 residues: D-alanine--D-alanyl carrier protein ligase (485 aa).

144–145 (TS) contacts ATP. Asp189 serves as a coordination point for D-alanine. Residue 284 to 289 (NTYGPT) participates in ATP binding. Residue Val293 coordinates D-alanine. ATP is bound by residues Asp365 and Lys473. Residue Lys473 coordinates D-alanine.

Belongs to the ATP-dependent AMP-binding enzyme family. DltA subfamily.

Its subcellular location is the cytoplasm. It carries out the reaction holo-[D-alanyl-carrier protein] + D-alanine + ATP = D-alanyl-[D-alanyl-carrier protein] + AMP + diphosphate. The protein operates within cell wall biogenesis; lipoteichoic acid biosynthesis. Functionally, catalyzes the first step in the D-alanylation of lipoteichoic acid (LTA), the activation of D-alanine and its transfer onto the D-alanyl carrier protein (Dcp) DltC. In an ATP-dependent two-step reaction, forms a high energy D-alanyl-AMP intermediate, followed by transfer of the D-alanyl residue as a thiol ester to the phosphopantheinyl prosthetic group of the Dcp. D-alanylation of LTA plays an important role in modulating the properties of the cell wall in Gram-positive bacteria, influencing the net charge of the cell wall. This is D-alanine--D-alanyl carrier protein ligase from Staphylococcus aureus (strain Mu3 / ATCC 700698).